The chain runs to 601 residues: Aspartate--tRNA ligase (601 aa).

L-aspartate is bound at residue Glu-183. The tract at residues 207 to 210 (QIFK) is aspartate. Arg-229 contributes to the L-aspartate binding site. ATP-binding positions include 229 to 231 (RDE) and Gln-238. His-457 lines the L-aspartate pocket. Glu-497 provides a ligand contact to ATP. Arg-504 serves as a coordination point for L-aspartate. 549 to 552 (GIDR) lines the ATP pocket.

Belongs to the class-II aminoacyl-tRNA synthetase family. Type 1 subfamily. Homodimer.

The protein resides in the cytoplasm. It catalyses the reaction tRNA(Asp) + L-aspartate + ATP = L-aspartyl-tRNA(Asp) + AMP + diphosphate. Functionally, catalyzes the attachment of L-aspartate to tRNA(Asp) in a two-step reaction: L-aspartate is first activated by ATP to form Asp-AMP and then transferred to the acceptor end of tRNA(Asp). The sequence is that of Aspartate--tRNA ligase from Leptospira interrogans serogroup Icterohaemorrhagiae serovar copenhageni (strain Fiocruz L1-130).